The primary structure comprises 269 residues: Formamidopyrimidine-DNA glycosylase (269 aa).

Pro2 serves as the catalytic Schiff-base intermediate with DNA. Glu3 functions as the Proton donor in the catalytic mechanism. The Proton donor; for beta-elimination activity role is filled by Lys57. Residues His90, Arg109, and Lys150 each coordinate DNA. Residues 235–269 (QVYGRAGEPCRACGTPIESAKHGQRSTFFCPRCQR) form an FPG-type zinc finger. Arg259 functions as the Proton donor; for delta-elimination activity in the catalytic mechanism.

This sequence belongs to the FPG family. In terms of assembly, monomer. The cofactor is Zn(2+).

It catalyses the reaction Hydrolysis of DNA containing ring-opened 7-methylguanine residues, releasing 2,6-diamino-4-hydroxy-5-(N-methyl)formamidopyrimidine.. The enzyme catalyses 2'-deoxyribonucleotide-(2'-deoxyribose 5'-phosphate)-2'-deoxyribonucleotide-DNA = a 3'-end 2'-deoxyribonucleotide-(2,3-dehydro-2,3-deoxyribose 5'-phosphate)-DNA + a 5'-end 5'-phospho-2'-deoxyribonucleoside-DNA + H(+). In terms of biological role, involved in base excision repair of DNA damaged by oxidation or by mutagenic agents. Acts as a DNA glycosylase that recognizes and removes damaged bases. Has a preference for oxidized purines, such as 7,8-dihydro-8-oxoguanine (8-oxoG). Has AP (apurinic/apyrimidinic) lyase activity and introduces nicks in the DNA strand. Cleaves the DNA backbone by beta-delta elimination to generate a single-strand break at the site of the removed base with both 3'- and 5'-phosphates. The polypeptide is Formamidopyrimidine-DNA glycosylase (Serratia proteamaculans (strain 568)).